The chain runs to 997 residues: Sarcoplasmic/endoplasmic reticulum calcium ATPase 2 (997 aa).

The Cytoplasmic segment spans residues 1–48 (MENAHTKTVEEVLGYFGVNESTGLSLEQVKKLKERWGSNELPAEEGKT). The residue at position 38 (serine 38) is a Phosphoserine. The chain crosses the membrane as a helical span at residues 49–69 (LLELVIEQFEDLLVRILLLAA). Residues 70 to 89 (CISFVLAWFEEGEETITAFV) lie on the Lumenal side of the membrane. A helical transmembrane segment spans residues 90–110 (EPFVILLILVANAIVGVWQER). At 111 to 253 (NAENAIEALK…QERTPLQQKL (143 aa)) the chain is on the cytoplasmic side. Residues 254 to 273 (DEFGEQLSKVISLICIAVWI) traverse the membrane as a helical segment. Residues 274 to 295 (INIGHFNDPVHGGSWIRGAIYY) are Lumenal-facing. Residues tyrosine 294 and tyrosine 295 each carry the 3'-nitrotyrosine modification. A helical membrane pass occupies residues 296-313 (FKIAVALAVAAIPEGLPA). Residues valine 304, alanine 305, isoleucine 307, and glutamate 309 each coordinate Ca(2+). At 314–756 (VITTCLALGT…EEGRAIYNNM (443 aa)) the chain is on the cytoplasmic side. The 4-aspartylphosphate intermediate role is filled by aspartate 351. The Mg(2+) site is built by aspartate 351 and threonine 353. Threonine 353 serves as a coordination point for ATP. A Phosphothreonine modification is found at threonine 441. Residues glutamate 442, arginine 489, and lysine 514 each coordinate ATP. Position 531 is a phosphoserine (serine 531). Arginine 559 contributes to the ATP binding site. An interaction with HAX1 region spans residues 575–594 (MNLEDSANFIKYETNLTFVG). Serine 580 carries the post-translational modification Phosphoserine. Residues threonine 624, glycine 625, and aspartate 626 each coordinate ATP. 2 positions are modified to phosphoserine: serine 661 and serine 663. The ATP site is built by arginine 677 and lysine 683. Aspartate 702 serves as a coordination point for Mg(2+). Asparagine 705 provides a ligand contact to ATP. A helical transmembrane segment spans residues 757 to 776 (KQFIRYLISSNVGEVVCIFL). Positions 767 and 770 each coordinate Ca(2+). Residues 777-786 (TAALGFPEAL) are Lumenal-facing. A helical transmembrane segment spans residues 787–807 (IPVQLLWVNLVTDGLPATALG). The segment at 787-807 (IPVQLLWVNLVTDGLPATALG) is interaction with PLN. Residues 788–997 (PVQLLWVNLV…RNYLEPAILE (210 aa)) form an interaction with TMEM64 and PDIA3 region. 3 residues coordinate Ca(2+): asparagine 795, threonine 798, and aspartate 799. Topologically, residues 808 to 827 (FNPPDLDIMNKPPRNPKEPL) are cytoplasmic. The helical transmembrane segment at 828 to 850 (ISGWLFFRYLAIGCYVGAATVGA) threads the bilayer. Topologically, residues 851 to 896 (AAWWFIAADGGPRVSFYQLSHFLQCKDDNPDFEGVDCAIFESPYPM) are lumenal. An intrachain disulfide couples cysteine 875 to cysteine 887. A helical membrane pass occupies residues 897 to 916 (TMALSVLVTIEMCNALNSLS). Glutamate 907 is a Ca(2+) binding site. The Cytoplasmic portion of the chain corresponds to 917–929 (ENQSLLRMPPWEN). The helical transmembrane segment at 930 to 948 (IWLVGSICLSMSLHFLILY) threads the bilayer. Residues 931 to 942 (WLVGSICLSMSL) form an interaction with PLN region. Residues 949 to 963 (VEPLPLIFQITPLNL) are Lumenal-facing. A helical transmembrane segment spans residues 964–984 (TQWLMVLKISLPVILMDETLK). The Cytoplasmic portion of the chain corresponds to 985–997 (FVARNYLEPAILE).

It belongs to the cation transport ATPase (P-type) (TC 3.A.3) family. Type IIA subfamily. Interacts with sarcolipin (SLN); the interaction inhibits ATP2A2 Ca(2+) affinity. Interacts with phospholamban (PLN); the interaction inhibits ATP2A2 Ca(2+) affinity. Interacts with myoregulin (MRLN). Interacts with ARLN and ERLN; the interactions inhibit ATP2A2 Ca(2+) affinity. Interacts with STRIT1/DWORF; the interaction results in activation of ATP2A2. Interacts with the monomeric forms of SLN, PLN, ARLN, ERLN and STRI1/DWORF. Interacts with HAX1. Interacts with S100A8 and S100A9. Interacts with SLC35G1 and STIM1. Interacts with TMEM203. Interacts with TMEM64 and PDIA3. Interacts with TMX1. Interacts with TMX2. Interacts with VMP1; VMP1 competes with PLN and SLN to prevent them from forming an inhibitory complex with ATP2A2. Interacts with ULK1. Interacts with S100A1 in a Ca(2+)-dependent manner. Interacts with TUNAR. Interacts with FLVCR2; this interaction occurs in the absence of heme and promotes ATP2A2 proteasomal degradation; this complex is dissociated upon heme binding. Interacts with FNIP1. As to quaternary structure, interacts with TRAM2 (via C-terminus). The cofactor is Mg(2+). Post-translationally, nitrated under oxidative stress. Nitration on the two tyrosine residues inhibits catalytic activity. Serotonylated on Gln residues by TGM2 in response to hypoxia, leading to its inactivation. In terms of tissue distribution, isoform 1 is expressed in the heart.

It localises to the endoplasmic reticulum membrane. The protein localises to the sarcoplasmic reticulum membrane. The enzyme catalyses Ca(2+)(in) + ATP + H2O = Ca(2+)(out) + ADP + phosphate + H(+). Has different conformational states with differential Ca2+ affinity. The E1 conformational state (active form) shows high Ca(2+) affinity, while the E2 state exhibits low Ca(2+) affinity. Binding of ATP allosterically increases its affinity for subsequent binding of Ca2+. Reversibly inhibited by phospholamban (PLN) at low calcium concentrations. PLN inhibits ATP2A2 Ca(2+) affinity by disrupting its allosteric activation by ATP. Inhibited by sarcolipin (SLN) and myoregulin (MRLN). The inhibition is blocked by VMP1. Enhanced by STRIT1/DWORF; STRIT1 increases activity by displacing sarcolipin (SLN), phospholamban (PLN) and myoregulin (MRLN). Stabilizes SERCA2 in its E2 state. In terms of biological role, this magnesium-dependent enzyme catalyzes the hydrolysis of ATP coupled with the translocation of calcium from the cytosol to the sarcoplasmic reticulum lumen. Involved in autophagy in response to starvation. Upon interaction with VMP1 and activation, controls ER-isolation membrane contacts for autophagosome formation. Also modulates ER contacts with lipid droplets, mitochondria and endosomes. In coordination with FLVCR2 mediates heme-stimulated switching from mitochondrial ATP synthesis to thermogenesis. Its function is as follows. Involved in the regulation of the contraction/relaxation cycle. Acts as a regulator of TNFSF11-mediated Ca(2+) signaling pathways via its interaction with TMEM64 which is critical for the TNFSF11-induced CREB1 activation and mitochondrial ROS generation necessary for proper osteoclast generation. Association between TMEM64 and SERCA2 in the ER leads to cytosolic Ca(2+) spiking for activation of NFATC1 and production of mitochondrial ROS, thereby triggering Ca(2+) signaling cascades that promote osteoclast differentiation and activation. The protein is Sarcoplasmic/endoplasmic reticulum calcium ATPase 2 (ATP2A2) of Felis catus (Cat).